Here is a 193-residue protein sequence, read N- to C-terminus: MIRKVKKEIRVIGFDDGTFKFKSRGDKVILVGVIMKGSSDVVGIVTRWITIDGLDVTDAIIDAINSSRFKDLRVVLLKGITYAGFNIVDVSRVFKETGLPVIVVVRKKPDIGAMESALRKHFDDYEVRIKLLRSAGKLVELIPGKLYYQAIGISYDKAAEVIQVTSRNSMVPEALRLAHMIASAVMCGESKKD.

This sequence belongs to the UPF0215 family.

The polypeptide is UPF0215 protein PH0071 (Pyrococcus horikoshii (strain ATCC 700860 / DSM 12428 / JCM 9974 / NBRC 100139 / OT-3)).